A 59-amino-acid polypeptide reads, in one-letter code: uncharacterized protein (59 aa).

Positions S27 to F59 are disordered. Residues S48 to F59 are compositionally biased toward polar residues.

This is an uncharacterized protein from Homo sapiens (Human).